The primary structure comprises 218 residues: Putative NAD(P)H nitroreductase SH0546 (218 aa).

This sequence belongs to the nitroreductase family. Requires FMN as cofactor.

This is Putative NAD(P)H nitroreductase SH0546 from Staphylococcus haemolyticus (strain JCSC1435).